Reading from the N-terminus, the 160-residue chain is Ribosomal RNA large subunit methyltransferase H (160 aa).

Residues Leu-76, Gly-108, and 127–132 (LGKMTW) each bind S-adenosyl-L-methionine.

The protein belongs to the RNA methyltransferase RlmH family. In terms of assembly, homodimer.

It is found in the cytoplasm. It catalyses the reaction pseudouridine(1915) in 23S rRNA + S-adenosyl-L-methionine = N(3)-methylpseudouridine(1915) in 23S rRNA + S-adenosyl-L-homocysteine + H(+). Its function is as follows. Specifically methylates the pseudouridine at position 1915 (m3Psi1915) in 23S rRNA. The polypeptide is Ribosomal RNA large subunit methyltransferase H (Rhizobium meliloti (strain 1021) (Ensifer meliloti)).